We begin with the raw amino-acid sequence, 351 residues long: Anthranilate phosphoribosyltransferase (351 aa).

5-phospho-alpha-D-ribose 1-diphosphate is bound by residues glycine 80, 83 to 84 (GD), threonine 88, 90 to 93 (NIST), 108 to 116 (KHGNRSVTS), and serine 120. Residue glycine 80 coordinates anthranilate. Serine 92 lines the Mg(2+) pocket. Residue asparagine 111 participates in anthranilate binding. An anthranilate-binding site is contributed by arginine 166. Residues aspartate 229 and glutamate 230 each contribute to the Mg(2+) site.

It belongs to the anthranilate phosphoribosyltransferase family. In terms of assembly, homodimer. Mg(2+) is required as a cofactor.

The catalysed reaction is N-(5-phospho-beta-D-ribosyl)anthranilate + diphosphate = 5-phospho-alpha-D-ribose 1-diphosphate + anthranilate. The protein operates within amino-acid biosynthesis; L-tryptophan biosynthesis; L-tryptophan from chorismate: step 2/5. Its function is as follows. Catalyzes the transfer of the phosphoribosyl group of 5-phosphorylribose-1-pyrophosphate (PRPP) to anthranilate to yield N-(5'-phosphoribosyl)-anthranilate (PRA). This Pelodictyon phaeoclathratiforme (strain DSM 5477 / BU-1) protein is Anthranilate phosphoribosyltransferase.